The chain runs to 251 residues: Flap endonuclease Xni (251 aa).

Residues 51–72 (EDDRSDSWRHQSLPDYKAGRSP) are disordered. A Mg(2+)-binding site is contributed by D104. Positions 160–249 (VLPHQLPDYW…LSGNLQQLRL (90 aa)) constitute a 5'-3' exonuclease domain. L171, A172, P180, V182, and I185 together coordinate K(+). Residues 184–189 (GIGAKT) form an interaction with DNA region.

Belongs to the Xni family. It depends on Mg(2+) as a cofactor. K(+) is required as a cofactor.

Has flap endonuclease activity. During DNA replication, flap endonucleases cleave the 5'-overhanging flap structure that is generated by displacement synthesis when DNA polymerase encounters the 5'-end of a downstream Okazaki fragment. In Yersinia enterocolitica serotype O:8 / biotype 1B (strain NCTC 13174 / 8081), this protein is Flap endonuclease Xni.